Reading from the N-terminus, the 196-residue chain is Pyridoxal 5'-phosphate synthase subunit PdxT (196 aa).

47 to 49 (GES) provides a ligand contact to L-glutamine. Cys-79 functions as the Nucleophile in the catalytic mechanism. L-glutamine-binding positions include Arg-106 and 134 to 135 (IR). Active-site charge relay system residues include His-170 and Glu-172.

Belongs to the glutaminase PdxT/SNO family. In the presence of PdxS, forms a dodecamer of heterodimers. Only shows activity in the heterodimer.

It catalyses the reaction aldehydo-D-ribose 5-phosphate + D-glyceraldehyde 3-phosphate + L-glutamine = pyridoxal 5'-phosphate + L-glutamate + phosphate + 3 H2O + H(+). The enzyme catalyses L-glutamine + H2O = L-glutamate + NH4(+). The protein operates within cofactor biosynthesis; pyridoxal 5'-phosphate biosynthesis. Catalyzes the hydrolysis of glutamine to glutamate and ammonia as part of the biosynthesis of pyridoxal 5'-phosphate. The resulting ammonia molecule is channeled to the active site of PdxS. This chain is Pyridoxal 5'-phosphate synthase subunit PdxT, found in Bacillus pumilus (strain SAFR-032).